A 308-amino-acid polypeptide reads, in one-letter code: D-alanine--D-alanine ligase (308 aa).

Residues 102–302 (KTVAKSAGIP…FGALLSWMVE (201 aa)) enclose the ATP-grasp domain. Residue 128–183 (PMEPPYVVKPVAEGSSFGVVIVREGQSHPPQVLGSAEWGYGERVMVERYIPGRELT) participates in ATP binding. Mg(2+) is bound by residues Asp-252, Glu-269, and Asn-271.

Belongs to the D-alanine--D-alanine ligase family. Requires Mg(2+) as cofactor. Mn(2+) is required as a cofactor.

The protein resides in the cytoplasm. It carries out the reaction 2 D-alanine + ATP = D-alanyl-D-alanine + ADP + phosphate + H(+). It participates in cell wall biogenesis; peptidoglycan biosynthesis. Cell wall formation. This is D-alanine--D-alanine ligase from Chelativorans sp. (strain BNC1).